Reading from the N-terminus, the 143-residue chain is Nucleoside diphosphate kinase (143 aa).

Residues Lys11, Phe59, Arg87, Thr93, Arg104, and Asn114 each coordinate ATP. Catalysis depends on His117, which acts as the Pros-phosphohistidine intermediate.

It belongs to the NDK family. As to quaternary structure, homotetramer. It depends on Mg(2+) as a cofactor.

It localises to the cytoplasm. It catalyses the reaction a 2'-deoxyribonucleoside 5'-diphosphate + ATP = a 2'-deoxyribonucleoside 5'-triphosphate + ADP. The enzyme catalyses a ribonucleoside 5'-diphosphate + ATP = a ribonucleoside 5'-triphosphate + ADP. Functionally, major role in the synthesis of nucleoside triphosphates other than ATP. The ATP gamma phosphate is transferred to the NDP beta phosphate via a ping-pong mechanism, using a phosphorylated active-site intermediate. The polypeptide is Nucleoside diphosphate kinase (Shigella boydii serotype 4 (strain Sb227)).